The primary structure comprises 128 residues: Small ribosomal subunit protein uS9c (128 aa).

Positions 106–128 are disordered; the sequence is SRIKERKKYGLKKARKAPQFSKR. Positions 109–128 are enriched in basic residues; that stretch reads KERKKYGLKKARKAPQFSKR.

Belongs to the universal ribosomal protein uS9 family.

It localises to the plastid. It is found in the chloroplast. In Cyanidium caldarium (Red alga), this protein is Small ribosomal subunit protein uS9c (rps9).